Consider the following 180-residue polypeptide: Adenine phosphoribosyltransferase (180 aa).

The protein belongs to the purine/pyrimidine phosphoribosyltransferase family. In terms of assembly, homodimer.

The protein resides in the cytoplasm. The catalysed reaction is AMP + diphosphate = 5-phospho-alpha-D-ribose 1-diphosphate + adenine. The protein operates within purine metabolism; AMP biosynthesis via salvage pathway; AMP from adenine: step 1/1. Its function is as follows. Catalyzes a salvage reaction resulting in the formation of AMP, that is energically less costly than de novo synthesis. The polypeptide is Adenine phosphoribosyltransferase (Mycolicibacterium paratuberculosis (strain ATCC BAA-968 / K-10) (Mycobacterium paratuberculosis)).